The chain runs to 360 residues: Putative F-box protein At3g47150 (360 aa).

An F-box domain is found at 6–56; that stretch reads NTTQIYIPLDLQINILLRLPVKSLLRFRCVSKLWCSIITSHDFRNRHFNIT.

This chain is Putative F-box protein At3g47150, found in Arabidopsis thaliana (Mouse-ear cress).